Reading from the N-terminus, the 264-residue chain is Thiazole synthase (264 aa).

Catalysis depends on Lys106, which acts as the Schiff-base intermediate with DXP. Residues Gly167, 193 to 194, and 215 to 216 each bind 1-deoxy-D-xylulose 5-phosphate; these read AG and NT.

The protein belongs to the ThiG family. Homotetramer. Forms heterodimers with either ThiH or ThiS.

The protein resides in the cytoplasm. The catalysed reaction is [ThiS sulfur-carrier protein]-C-terminal-Gly-aminoethanethioate + 2-iminoacetate + 1-deoxy-D-xylulose 5-phosphate = [ThiS sulfur-carrier protein]-C-terminal Gly-Gly + 2-[(2R,5Z)-2-carboxy-4-methylthiazol-5(2H)-ylidene]ethyl phosphate + 2 H2O + H(+). It participates in cofactor biosynthesis; thiamine diphosphate biosynthesis. Its function is as follows. Catalyzes the rearrangement of 1-deoxy-D-xylulose 5-phosphate (DXP) to produce the thiazole phosphate moiety of thiamine. Sulfur is provided by the thiocarboxylate moiety of the carrier protein ThiS. In vitro, sulfur can be provided by H(2)S. In Xanthomonas campestris pv. campestris (strain 8004), this protein is Thiazole synthase.